We begin with the raw amino-acid sequence, 119 residues long: Non-structural protein 3b (119 aa).

In terms of domain architecture, DRBM spans 3-79 (YVSLLNQVWQ…AARKVCLRLQ (77 aa)).

As to quaternary structure, interacts with host RUNX1 isoform b.

The protein localises to the host nucleus. It is found in the host nucleolus. Its subcellular location is the host mitochondrion. In terms of biological role, induces host cell G0/G1 arrest and apoptosis. This Pipistrellus abramus (Japanese pipistrelle) protein is Non-structural protein 3b.